The chain runs to 137 residues: Large ribosomal subunit protein uL16c (137 aa).

Positions 1–17 (MLSPKKTRFRRQHRGRM) are enriched in basic residues. Positions 1–21 (MLSPKKTRFRRQHRGRMKGLS) are disordered.

The protein belongs to the universal ribosomal protein uL16 family. As to quaternary structure, part of the 50S ribosomal subunit.

It is found in the plastid. In Cuscuta obtusiflora (Peruvian dodder), this protein is Large ribosomal subunit protein uL16c.